A 136-amino-acid polypeptide reads, in one-letter code: Protein Tat (136 aa).

The cysteine-rich stretch occupies residues 22–37 (CTNCYCKKCCFHCPVC). The segment at 38–48 (FTKKALGISYG) is core. The span at 48-57 (GRKRRGRKSA) shows a compositional bias: basic residues. The disordered stretch occupies residues 48 to 136 (GRKRRGRKSA…SGSSGSACKH (89 aa)). The short motif at 49 to 55 (RKRRGRK) is the Nuclear localization signal, and RNA-binding (TAR) element. The span at 58 to 73 (VHSTNNQDPVRQQSLP) shows a compositional bias: polar residues. Over residues 104–120 (SSVSSGRTSGTSSSGYT) the composition is skewed to low complexity. The segment covering 123–136 (FKTSSGSSGSACKH) has biased composition (polar residues).

The protein belongs to the lentiviruses Tat family. Interacts with host CCNT1. Associates with the P-TEFb complex composed at least of Tat, P-TEFb (CDK9 and CCNT1), TAR RNA, RNA Pol II. Interacts with CCNT2; the resulting complex is unable to bind to TAR RNA.

The protein localises to the host nucleus. Its subcellular location is the host nucleolus. Transcriptional activator that increases RNA Pol II processivity, thereby increasing the level of full-length viral transcripts. Recognizes a hairpin structure at the 5'-LTR of the nascent viral mRNAs referred to as the transactivation responsive RNA element (TAR) and recruits the cyclin T1-CDK9 complex (P-TEFb complex) that will in turn hyperphosphorylate the RNA polymerase II to allow efficient elongation. The CDK9 component of P-TEFb and other Tat-activated kinases hyperphosphorylate the C-terminus of RNA Pol II that becomes stabilized and much more processive. Functionally, extracellular circulating Tat can be endocytosed by surrounding uninfected cells via the binding to several surface receptors. Endosomal low pH allows Tat to cross the endosome membrane to enter the cytosol and eventually further translocate into the nucleus, thereby inducing severe cell dysfunctions ranging from cell activation to cell death. Through. In Simian immunodeficiency virus (isolate TAN1) (SIV-cpz), this protein is Protein Tat.